Here is a 1682-residue protein sequence, read N- to C-terminus: MWRAEGKWLPKTSRKSVSQSVFCGTSTYCVLNTVPPIEDDHGNSNSSHVKIFLPKKLLECLPKCSSLPKERHRWNTNEEIAAYLITFEKHEEWLTTSPKTRPQNGSMILYNRKKVKYRKDGYCWKKRKDGKTTREDHMKLKVQGVECLYGCYVHSSIIPTFHRRCYWLLQNPDIVLVHYLNVPAIEDCGKPCGPILCSINTDKKEWAKWTKEELIGQLKPMFHGIKWTCSNGNSSSGFSVEQLVQQILDSHQTKPQPRTHNCLCTGSLGAGSSVHHKCNSAKHRIISPKVEPRAGGYGGHSEVQHNDVSEGKHEPSHGRSTSREKRNGKVAKPALLHQNSTEVSSTNQVEVPDTTQSSPVSISSGLNSDPDMVDSPVVTGVSSMAVASVMGGLSQSATVFMSEVTNEAVYTMSPTAGPNHHLLSPDASQGLVLAVSSDGHKFAFPTTGSSDSLSMLPANVSEELVLSTTLDGGRKIPETAMNFDPDCFLNNPKQGQTYGGGGLKAEMVSTNIRHSPPAERSFGFTSVLTKEIKTEDTSFEQQMAKEAAYSSSAAAAASSSLTLTAAGSSLLPSGGGLSPSTTLEQMDFSAIDSNKDYASSFSQTGHSPHIHQTPSPSFFLQDASKPLPLEQNTHSSLSESGAAFVMPTVKTEASSQTSSCSGHVETRIESTSSLHLMQFQANFQAMAAEGEVTMETSQAAEGNEVLLKSGELQACGSEHYLQPETNGVIRSAGGVPLLPSNVVQGLYPVAQPSLGNSSNMELSLDHFDISFSNQFSDLINDFISVEGGSGTIYGHQLVSGDSAALSQSEDGARAPFTQAEMCIPCCSPQQGSLQLSSAEGGPSTMAYMHVAEVVSAASAQGALGMLQQSGRVFMVTDYSPEWSYPEGGVKVLITGPWQEASNNYSCLFDQISVPASLIQPGVLRCYCPAHDTGLVTLQVAFNNQIISNSVVFEYKARALPTLPSSQHDWLSLDDNQFRMSILERLEQMERRMAEMTGSQQHKQASGGGGSGSGSGSGAGGGQAQCASGAGTLGSCFESRVVVVCEKMMSRACWAKSKHLIHSKTFRGMTLLHLAAAQGYATLIQTLIKWRTKHADSIDLELEVDPLNVDHFSCTPLMWACALGHLEAAVVLYKWDRRAISIPDSLGRLPLGIARSRGHVKLAECLEHLQRDEQAQLGQASRIHCAPSEEPTTDSWMAQWQREAMSPPEIPKGVTVIASTNPELRRPRSEPSNYYSTEGHKDYPAPKKHKLNPESFQARQEKLLCTALSLEQPNIRKQSPRSKQPSPETISPSEGVREYSREAAPPTPETAASQASASQPVVKWSAKDLYIGVSTVQVTGNPKGTSVVKDAAPSQVRPREPMSVLMLANREVVNTEMGAYRDRTEHEDCPQPMDDIQVNMMTLAEHIIEATPDRIKQENFVPMESSALERTDPATISSTMSWLASYLADADRLPSAAHIRSAYTEPLTPSSNASLSPAGSPVSEVAFEKPSLPSAADWSEFLSASTSEKVESELAQLTLSDHEQRELYEAARLVQTAFRKYKGRPLREQQEVAAAVIQRCYRKYKQLTWIALKYALYKKMTQAAILIQSKFRSYYEQKRFQQSRRAAVLIQNFYRSYKKCGRRRPARRTAVIVQQKLRSSLLTKKQDQAARKIMRFLRRCRHSPLVDHRLYKRSERIEKGQGT.

The CG-1 DNA-binding region spans 63 to 188; it reads KCSSLPKERH…YLNVPAIEDC (126 aa). Residues 112-119 carry the Nuclear localization signal motif; the sequence is RKKVKYRK. Disordered regions lie at residues 284 to 375 and 599 to 622; these read RIIS…MVDS and SSFSQTGHSPHIHQTPSPSFFLQD. Basic and acidic residues predominate over residues 302–327; that stretch reads EVQHNDVSEGKHEPSHGRSTSREKRN. 2 stretches are compositionally biased toward polar residues: residues 337–367 and 599–618; these read HQNSTEVSSTNQVEVPDTTQSSPVSISSGLN and SSFSQTGHSPHIHQTPSPSF. One can recognise an IPT/TIG domain in the interval 877-955; it reads DYSPEWSYPE…ISNSVVFEYK (79 aa). The segment at 992–1020 is disordered; that stretch reads MAEMTGSQQHKQASGGGGSGSGSGSGAGG. The segment covering 1005–1020 has biased composition (gly residues); it reads SGGGGSGSGSGSGAGG. 3 ANK repeats span residues 1066–1095, 1111–1141, and 1145–1174; these read RGMTLLHLAAAQGYATLIQTLIKWRTKHAD, FSCTPLMWACALGHLEAAVVLYKWDRRAISI, and LGRLPLGIARSRGHVKLAECLEHLQRDEQA. Disordered regions lie at residues 1217-1249 and 1267-1318; these read ASTNPELRRPRSEPSNYYSTEGHKDYPAPKKHK and LSLE…SASQ. Positions 1268 to 1291 are enriched in polar residues; sequence SLEQPNIRKQSPRSKQPSPETISP. A compositionally biased stretch (low complexity) spans 1308 to 1318; it reads ETAASQASASQ. IQ domains lie at 1549-1585, 1586-1608, and 1609-1631; these read QEVAAAVIQRCYRKYKQLTWIALKYALYKKMTQAAIL, IQSKFRSYYEQKRFQQSRRAAVL, and IQNFYRSYKKCGRRRPARRTAVI.

The protein belongs to the CAMTA family. In terms of assembly, may interact with calmodulin.

It is found in the nucleus. The protein localises to the cytoplasm. Transcriptional activator. The sequence is that of Calmodulin-binding transcription activator 1 from Mus musculus (Mouse).